A 255-amino-acid chain; its full sequence is Epoxyqueuosine reductase QueH (255 aa).

[4Fe-4S] cluster contacts are provided by cysteine 44, cysteine 45, cysteine 128, and cysteine 131. Residues cysteine 210 and cysteine 212 are joined by a disulfide bond.

It belongs to the QueH family.

It catalyses the reaction epoxyqueuosine(34) in tRNA + AH2 = queuosine(34) in tRNA + A + H2O. It participates in tRNA modification; tRNA-queuosine biosynthesis. In terms of biological role, catalyzes the conversion of epoxyqueuosine (oQ) to queuosine (Q), which is a hypermodified base found in the wobble positions of tRNA(Asp), tRNA(Asn), tRNA(His) and tRNA(Tyr). The chain is Epoxyqueuosine reductase QueH from Streptococcus pyogenes serotype M1.